Consider the following 243-residue polypeptide: Cell division protein ZipA (243 aa).

Over 1 to 4 (MSDV) the chain is Periplasmic. Residues 5-25 (TLLRIGIAIVGILFVAAVFFF) traverse the membrane as a helical segment. The Cytoplasmic segment spans residues 26–243 (STPKTSAHRV…VPPLIKNSRW (218 aa)). Residues 32–89 (AHRVRTKKEEPPRERREPMLSTEVDNSPHQSVDEVPASVPQQQVNPEATKPGEIELGK) are disordered. The span at 38–49 (KKEEPPRERREP) shows a compositional bias: basic and acidic residues.

It belongs to the ZipA family. As to quaternary structure, interacts with FtsZ via their C-terminal domains.

It localises to the cell inner membrane. Functionally, essential cell division protein that stabilizes the FtsZ protofilaments by cross-linking them and that serves as a cytoplasmic membrane anchor for the Z ring. Also required for the recruitment to the septal ring of downstream cell division proteins. In Xylella fastidiosa (strain Temecula1 / ATCC 700964), this protein is Cell division protein ZipA.